The chain runs to 312 residues: Methionyl-tRNA formyltransferase (312 aa).

117–120 contributes to the (6S)-5,6,7,8-tetrahydrofolate binding site; sequence SLLP.

Belongs to the Fmt family.

It carries out the reaction L-methionyl-tRNA(fMet) + (6R)-10-formyltetrahydrofolate = N-formyl-L-methionyl-tRNA(fMet) + (6S)-5,6,7,8-tetrahydrofolate + H(+). Functionally, attaches a formyl group to the free amino group of methionyl-tRNA(fMet). The formyl group appears to play a dual role in the initiator identity of N-formylmethionyl-tRNA by promoting its recognition by IF2 and preventing the misappropriation of this tRNA by the elongation apparatus. In Bordetella bronchiseptica (strain ATCC BAA-588 / NCTC 13252 / RB50) (Alcaligenes bronchisepticus), this protein is Methionyl-tRNA formyltransferase.